The following is a 71-amino-acid chain: Pro-glucagon (71 aa).

This sequence belongs to the glucagon family.

It is found in the secreted. In terms of biological role, plays a key role in glucose metabolism and homeostasis. Regulates blood glucose by increasing gluconeogenesis and decreasing glycolysis. The polypeptide is Pro-glucagon (gcg) (Ictalurus punctatus (Channel catfish)).